The chain runs to 485 residues: UDP-N-acetylmuramoyl-L-alanyl-D-glutamate--2,6-diaminopimelate ligase (485 aa).

S30 lines the UDP-N-acetyl-alpha-D-muramoyl-L-alanyl-D-glutamate pocket. 111–117 contributes to the ATP binding site; sequence GTNGKTT. UDP-N-acetyl-alpha-D-muramoyl-L-alanyl-D-glutamate is bound by residues 153-154, S180, Q186, and R188; that span reads TT. K220 carries the post-translational modification N6-carboxylysine. Residues R378, 402 to 405, G455, and E459 each bind meso-2,6-diaminopimelate; that span reads DNPR. A Meso-diaminopimelate recognition motif motif is present at residues 402–405; it reads DNPR.

This sequence belongs to the MurCDEF family. MurE subfamily. Mg(2+) is required as a cofactor. Carboxylation is probably crucial for Mg(2+) binding and, consequently, for the gamma-phosphate positioning of ATP.

Its subcellular location is the cytoplasm. It catalyses the reaction UDP-N-acetyl-alpha-D-muramoyl-L-alanyl-D-glutamate + meso-2,6-diaminopimelate + ATP = UDP-N-acetyl-alpha-D-muramoyl-L-alanyl-gamma-D-glutamyl-meso-2,6-diaminopimelate + ADP + phosphate + H(+). Its pathway is cell wall biogenesis; peptidoglycan biosynthesis. In terms of biological role, catalyzes the addition of meso-diaminopimelic acid to the nucleotide precursor UDP-N-acetylmuramoyl-L-alanyl-D-glutamate (UMAG) in the biosynthesis of bacterial cell-wall peptidoglycan. This Bacteroides fragilis (strain ATCC 25285 / DSM 2151 / CCUG 4856 / JCM 11019 / LMG 10263 / NCTC 9343 / Onslow / VPI 2553 / EN-2) protein is UDP-N-acetylmuramoyl-L-alanyl-D-glutamate--2,6-diaminopimelate ligase.